We begin with the raw amino-acid sequence, 238 residues long: Ribosomal RNA small subunit methyltransferase G (238 aa).

S-adenosyl-L-methionine is bound by residues G77, F82, 128–129 (AE), and R147.

It belongs to the methyltransferase superfamily. RNA methyltransferase RsmG family.

The protein localises to the cytoplasm. Its function is as follows. Specifically methylates the N7 position of guanine in position 535 of 16S rRNA. This Lysinibacillus sphaericus (strain C3-41) protein is Ribosomal RNA small subunit methyltransferase G.